The primary structure comprises 578 residues: ATP-dependent RNA helicase has-1 (578 aa).

The interval 1-91 is disordered; it reads MASEFSKKRK…KDAEAGDELT (91 aa). The span at 13–26 shows a compositional bias: basic and acidic residues; that stretch reads DAKIATEDGAATDK. Basic residues predominate over residues 27–36; the sequence is KTKKVKKDKK. 2 stretches are compositionally biased toward acidic residues: residues 43–54 and 77–88; these read EVVEDATPEEEN and EDSDDKDAEAGD. The short motif at 107–135 is the Q motif element; sequence TDFSELNLSDKTMKAIAEMGFTKMTEIQR. The Helicase ATP-binding domain maps to 138 to 313; that stretch reads IPPLLAGKDV…RISLRPGPLY (176 aa). Residue 151 to 158 coordinates ATP; sequence AKTGSGKT. A DEAD box motif is present at residues 260-263; the sequence is DEAD. The Bipartite nuclear localization signal signature appears at 339 to 355; that stretch reads KRFLLLFSFLKKMQKKK. In terms of domain architecture, Helicase C-terminal spans 343-497; sequence LLFSFLKKMQ…NVQSQLEKLI (155 aa). Residues 556 to 578 are disordered; it reads SMSRDKKQTSRRAYGSQPKQNRH.

It belongs to the DEAD box helicase family. DDX18/HAS1 subfamily. Associates in the nucleolus with the 60S and pre-60S ribosomal subunits.

The protein resides in the nucleus. The protein localises to the nucleolus. It catalyses the reaction ATP + H2O = ADP + phosphate + H(+). In terms of biological role, ATP-dependent RNA helicase involved in 40S ribosomal subunit biogenesis. Required for the processing and cleavage of 35S pre-rRNA at sites A0, A1, and A2, leading to mature 18S rRNA. The chain is ATP-dependent RNA helicase has-1 (has-1) from Neurospora crassa (strain ATCC 24698 / 74-OR23-1A / CBS 708.71 / DSM 1257 / FGSC 987).